Here is a 737-residue protein sequence, read N- to C-terminus: O-GlcNAcase BT_4395 (737 aa).

A signal peptide spans 1 to 21 (MKNNKIYLLGACLLCAVTTFA). Residues 148 to 433 (VRYRGVVEGF…WKDAIRTILP (286 aa)) are catalytic domain. The 268-residue stretch at 149–416 (RYRGVVEGFY…SVASYAWNPA (268 aa)) folds into the GH84 domain. Gly-156, Lys-187, and Asp-263 together coordinate a protein. Asp-264 acts as the Proton donor in catalysis. Residues Tyr-303, 358–360 (WWN), Asp-365, and Asn-393 contribute to the a protein site.

This sequence belongs to the glycosyl hydrolase 84 family. In terms of assembly, homodimer.

The catalysed reaction is 3-O-(N-acetyl-beta-D-glucosaminyl)-L-seryl-[protein] + H2O = N-acetyl-D-glucosamine + L-seryl-[protein]. The enzyme catalyses 3-O-(N-acetyl-beta-D-glucosaminyl)-L-threonyl-[protein] + H2O = L-threonyl-[protein] + N-acetyl-D-glucosamine. Inhibited by 1,2-dideoxy-2'-methyl-alpha-D-glucopyranoso-[2,1-d]-delta 2'-thiazoline (NAG-thiazoline) and O-(2-acetamido-2-deoxy-D-glucopyranosylidene)amino-N-phenyl-carbamate (PUGNAc). Not inhibited by Streptozotocin. In terms of biological role, can hydrolyze the glycosidic link of O-GlcNAcylated proteins. Can use p-nitrophenyl-beta-GlcNAc and 4-methylumbelliferone-GlcNAc as substrates (in vitro). This Bacteroides thetaiotaomicron (strain ATCC 29148 / DSM 2079 / JCM 5827 / CCUG 10774 / NCTC 10582 / VPI-5482 / E50) protein is O-GlcNAcase BT_4395.